We begin with the raw amino-acid sequence, 163 residues long: MELETVLQSFQSVRQLLQYTSKNTSGFWRYLFGSTLSKVVNRVKEDYREEFENILADCPGLLASLDLCYHLVFQEKVVRSLDFSSVGRTVASIAFLATILDKWSEKSHLSWDYMLDYMSMQLWRAWLKRRVCIYSLARPLTMPPLPTLQEEKEEERNPAVVEK.

Belongs to the adenoviridae E1B 19 kDa protein family.

The protein localises to the host cell membrane. Its subcellular location is the host nucleus envelope. The protein resides in the host nucleus lamina. Functionally, putative adenovirus Bcl-2 homolog that inhibits apoptosis induced by TNF or FAS pathways, as well as p53-mediated apoptosis. Without E1B 19K function, virus production is compromised because of premature death of host cell. Interacts with Bax protein in cell lysates. This Human adenovirus A serotype 12 (HAdV-12) protein is E1B protein, small T-antigen.